The primary structure comprises 250 residues: Uracil-DNA glycosylase (250 aa).

Residue D78 is the Proton acceptor of the active site. The tract at residues 228 to 250 (RGQKPVDWSGEQNNASRQGEFAL) is disordered.

This sequence belongs to the uracil-DNA glycosylase (UDG) superfamily. UNG family.

The protein resides in the cytoplasm. It carries out the reaction Hydrolyzes single-stranded DNA or mismatched double-stranded DNA and polynucleotides, releasing free uracil.. In terms of biological role, excises uracil residues from the DNA which can arise as a result of misincorporation of dUMP residues by DNA polymerase or due to deamination of cytosine. This Bordetella parapertussis (strain 12822 / ATCC BAA-587 / NCTC 13253) protein is Uracil-DNA glycosylase.